The sequence spans 249 residues: UDP-N-acetyl-D-mannosaminuronic acid transferase (249 aa).

It belongs to the glycosyltransferase 26 family.

It carries out the reaction UDP-N-acetyl-alpha-D-mannosaminouronate + N-acetyl-alpha-D-glucosaminyl-di-trans,octa-cis-undecaprenyl diphosphate = beta-D-ManNAcA-(1-&gt;4)-alpha-D-GlcNAc-di-trans,octa-cis-undecaprenyl diphosphate + UDP + H(+). Its pathway is bacterial outer membrane biogenesis; enterobacterial common antigen biosynthesis. Its function is as follows. Catalyzes the synthesis of Und-PP-GlcNAc-ManNAcA (Lipid II), the second lipid-linked intermediate involved in enterobacterial common antigen (ECA) synthesis. This chain is UDP-N-acetyl-D-mannosaminuronic acid transferase, found in Pectobacterium carotovorum subsp. carotovorum (strain PC1).